Reading from the N-terminus, the 262-residue chain is Thiazole synthase (262 aa).

Residue lysine 97 is the Schiff-base intermediate with DXP of the active site. Residues glycine 158, 185–186, and 207–208 each bind 1-deoxy-D-xylulose 5-phosphate; these read AG and NT. The interval 243–262 is disordered; the sequence is DKAQASTPTVGQPFWHSAEY.

The protein belongs to the ThiG family. Homotetramer. Forms heterodimers with either ThiH or ThiS.

It localises to the cytoplasm. It catalyses the reaction [ThiS sulfur-carrier protein]-C-terminal-Gly-aminoethanethioate + 2-iminoacetate + 1-deoxy-D-xylulose 5-phosphate = [ThiS sulfur-carrier protein]-C-terminal Gly-Gly + 2-[(2R,5Z)-2-carboxy-4-methylthiazol-5(2H)-ylidene]ethyl phosphate + 2 H2O + H(+). It functions in the pathway cofactor biosynthesis; thiamine diphosphate biosynthesis. In terms of biological role, catalyzes the rearrangement of 1-deoxy-D-xylulose 5-phosphate (DXP) to produce the thiazole phosphate moiety of thiamine. Sulfur is provided by the thiocarboxylate moiety of the carrier protein ThiS. In vitro, sulfur can be provided by H(2)S. The protein is Thiazole synthase of Neisseria meningitidis serogroup A / serotype 4A (strain DSM 15465 / Z2491).